The chain runs to 248 residues: 14-3-3 protein sigma (248 aa).

Phosphoserine occurs at positions 5, 74, and 248.

It belongs to the 14-3-3 family. In terms of assembly, homodimer. Interacts with KRT17 and SAMSN1. Found in a complex with XPO7, EIF4A1, ARHGAP1, VPS26A, VPS29 and VPS35. Interacts with GAB2. Interacts with SRPK2. Interacts with COPS6. Interacts with COP1; this interaction leads to proteasomal degradation. Interacts with the 'Thr-369' phosphorylated form of DAPK2. Interacts with PI4KB. Interacts with SLITRK1. Interacts with LRRK2; this interaction is dependent on LRRK2 phosphorylation. Interacts with PKP3 (via N-terminus); the interaction maintains the cytoplasmic pool of PKP3, facilitates PKP3 exchange at desmosomes and restricts PKP3 localization to existing desmosome cell junctions. Interacts with LCP2. In terms of processing, ubiquitinated. Ubiquitination by RFFL induces proteasomal degradation and indirectly regulates p53/TP53 activation. As to expression, expressed in dorsal skin (at protein level). Expressed in the basal layer of skin epithelium and in outer root sheath of hair follicle.

It is found in the cytoplasm. It localises to the nucleus. The protein localises to the secreted. Adapter protein implicated in the regulation of a large spectrum of both general and specialized signaling pathways. Binds to a large number of partners, usually by recognition of a phosphoserine or phosphothreonine motif. Binding generally results in the modulation of the activity of the binding partner. Promotes cytosolic retention of GBP1 GTPase by binding to phosphorylated GBP1, thereby inhibiting the innate immune response. Also acts as a TP53/p53-regulated inhibitor of G2/M progression. When bound to KRT17, regulates protein synthesis and epithelial cell growth by stimulating Akt/mTOR pathway. Acts to maintain desmosome cell junction adhesion in epithelial cells via interacting with and sequestering PKP3 to the cytoplasm, thereby restricting its translocation to existing desmosome structures and therefore maintaining desmosome protein homeostasis. Also acts to facilitate PKP3 exchange at desmosome plaques, thereby maintaining keratinocyte intercellular adhesion. May also regulate MDM2 autoubiquitination and degradation and thereby activate p53/TP53. This chain is 14-3-3 protein sigma (Sfn), found in Mus musculus (Mouse).